The primary structure comprises 204 residues: Outer-membrane lipoprotein LolB (204 aa).

The signal sequence occupies residues 1 to 20 (MLRSRRLALLCLATPLWLAA). Cys-21 carries N-palmitoyl cysteine lipidation. Cys-21 carries S-diacylglycerol cysteine lipidation. The segment at 131–150 (GRAAPGTPSNVTRDANGRPD) is disordered.

This sequence belongs to the LolB family. As to quaternary structure, monomer.

It is found in the cell outer membrane. Plays a critical role in the incorporation of lipoproteins in the outer membrane after they are released by the LolA protein. This chain is Outer-membrane lipoprotein LolB, found in Cupriavidus metallidurans (strain ATCC 43123 / DSM 2839 / NBRC 102507 / CH34) (Ralstonia metallidurans).